The primary structure comprises 184 residues: Phosphopantetheine adenylyltransferase (184 aa).

Position 8 (S8) interacts with substrate. Residues 8–9 and H16 each bind ATP; that span reads SF. Positions 40, 74, and 88 each coordinate substrate. ATP contacts are provided by residues 89–91, E99, and 123–129; these read GLR and WSFVSST.

It belongs to the bacterial CoaD family. In terms of assembly, homohexamer. It depends on Mg(2+) as a cofactor.

It is found in the cytoplasm. The enzyme catalyses (R)-4'-phosphopantetheine + ATP + H(+) = 3'-dephospho-CoA + diphosphate. It functions in the pathway cofactor biosynthesis; coenzyme A biosynthesis; CoA from (R)-pantothenate: step 4/5. In terms of biological role, reversibly transfers an adenylyl group from ATP to 4'-phosphopantetheine, yielding dephospho-CoA (dPCoA) and pyrophosphate. The polypeptide is Phosphopantetheine adenylyltransferase (Deinococcus geothermalis (strain DSM 11300 / CIP 105573 / AG-3a)).